The following is a 434-amino-acid chain: MQQTCKRKIWMQISVALVTSLWMISAQAELLIKVTEGRVDAVPIAVVPFDGAKNAEEDVSAIVQADLHRSGQFKPLPPQDMLSRPRNEQEMIYRDFKVLGTEYVITGSMKRQETGGYEVGYALFDVARQKKLMSETYRPPASQLRDVAHAISDRIYEQLTGIPGAFSTKILYVTHNRHDANPYQLQYADADGHRVTTILRSNEPIMSPTWSPDGRKIAYVSFEDQGRPGIYIHNLATTEREKVSSFSGINGAPDWSPDGQHLALTLSRDGNPEIYMLNLSTKVLTRLTNNYGIDTEPRWLPDGEHLVFTSSRSGGPQIYKLNINDKSVRRVSFQGGYNARSDVTPDGRYLVYVHRRNGNYNVGVQDLQRGTFNIVTRTDMDESPSVAPNGSMVIYGTQHGGAGVLEAVSIDGRVKVELPSKEGEVREPAWSPFL.

The first 28 residues, 1–28 (MQQTCKRKIWMQISVALVTSLWMISAQA), serve as a signal peptide directing secretion.

This sequence belongs to the TolB family. The Tol-Pal system is composed of five core proteins: the inner membrane proteins TolA, TolQ and TolR, the periplasmic protein TolB and the outer membrane protein Pal. They form a network linking the inner and outer membranes and the peptidoglycan layer.

The protein localises to the periplasm. Its function is as follows. Part of the Tol-Pal system, which plays a role in outer membrane invagination during cell division and is important for maintaining outer membrane integrity. This is Tol-Pal system protein TolB from Alcanivorax borkumensis (strain ATCC 700651 / DSM 11573 / NCIMB 13689 / SK2).